We begin with the raw amino-acid sequence, 503 residues long: UPF0522 protein C (503 aa).

An N-terminal signal peptide occupies residues 1 to 18; the sequence is MKLFILIILSICLALVNS. Residues N330, N337, and N370 are each glycosylated (N-linked (GlcNAc...) asparagine).

This sequence belongs to the UPF0522 family.

The protein resides in the secreted. In Dictyostelium discoideum (Social amoeba), this protein is UPF0522 protein C.